Reading from the N-terminus, the 483-residue chain is Zinc metalloproteinase/disintegrin VMP-II (483 aa).

The signal sequence occupies residues 1 to 20; that stretch reads MIQVLLVTLCLAAFPYQGNS. A propeptide spanning residues 21 to 191 is cleaved from the precursor; sequence IILESGNVND…KASQLNLTPE (171 aa). One can recognise a Peptidase M12B domain in the interval 198-394; sequence RYIELVVVAD…HNPQCMLNEP (197 aa). Glu201 and Asp285 together coordinate Ca(2+). 3 disulfide bridges follow: Cys309–Cys389, Cys349–Cys373, and Cys351–Cys356. A Zn(2+)-binding site is contributed by His334. The active site involves Glu335. Zn(2+)-binding residues include His338 and His344. The Ca(2+) site is built by Cys389 and Asn392. Positions 395–414 are excised as a propeptide; that stretch reads LRTDIVSTPVSGNELWETGE. Residues 402–483 form the Disintegrin domain; that stretch reads TPVSGNELWE…AGCPRNPFHA (82 aa). 4 disulfide bridges follow: Cys425/Cys448, Cys439/Cys445, Cys444/Cys469, and Cys457/Cys476. Residues 461–463 carry the Cell attachment site; atypical (KGD) motif; sequence KGD.

It belongs to the venom metalloproteinase (M12B) family. P-II subfamily. P-IIe sub-subfamily. As to quaternary structure, heterodimer; disulfide-linked (disintegrin). Requires Zn(2+) as cofactor. Expressed by the venom gland.

It localises to the secreted. Its activity is regulated as follows. Inhibited by EDTA and 1,10-phenanthroline, but not by PMSF. Functionally, has fibrinolytic activity. The recombinant enzyme cleaves both alpha- (FGA) and beta-chains (FGB) of fibrinogen, but not the gamma-chain. The recombinant protein does not produce hemorrhage in mice and does not have effect on ADP- or collagen-stimulated platelet aggregation. Its function is as follows. Inhibits platelet aggregation induced by ADP, thrombin, platelet-activating factor and collagen. Acts by inhibiting fibrinogen interaction with platelet receptors GPIIb/GPIIIa (ITGA2B/ITGB3). The protein is Zinc metalloproteinase/disintegrin VMP-II of Agkistrodon piscivorus leucostoma (Western cottonmouth).